We begin with the raw amino-acid sequence, 291 residues long: ATP synthase gamma chain (291 aa).

The protein belongs to the ATPase gamma chain family. F-type ATPases have 2 components, CF(1) - the catalytic core - and CF(0) - the membrane proton channel. CF(1) has five subunits: alpha(3), beta(3), gamma(1), delta(1), epsilon(1). CF(0) has three main subunits: a, b and c.

Its subcellular location is the cell inner membrane. In terms of biological role, produces ATP from ADP in the presence of a proton gradient across the membrane. The gamma chain is believed to be important in regulating ATPase activity and the flow of protons through the CF(0) complex. The protein is ATP synthase gamma chain of Burkholderia mallei (strain NCTC 10247).